Consider the following 334-residue polypeptide: ADP-L-glycero-D-manno-heptose-6-epimerase (334 aa).

Residues Phe11–Ile12, Asp32–Asn33, Lys39, Lys54, Gln77–Ser81, and Asn94 each bind NADP(+). The active-site Proton acceptor is Tyr141. Lys145 provides a ligand contact to NADP(+). Asn171 contacts substrate. NADP(+) is bound by residues Val172 and Lys180. Lys180 serves as the catalytic Proton acceptor. Substrate is bound by residues Arg182, His189, Phe203–Asn206, Arg216, and Tyr295.

The protein belongs to the NAD(P)-dependent epimerase/dehydratase family. HldD subfamily. In terms of assembly, homopentamer. The cofactor is NADP(+).

The catalysed reaction is ADP-D-glycero-beta-D-manno-heptose = ADP-L-glycero-beta-D-manno-heptose. Its pathway is nucleotide-sugar biosynthesis; ADP-L-glycero-beta-D-manno-heptose biosynthesis; ADP-L-glycero-beta-D-manno-heptose from D-glycero-beta-D-manno-heptose 7-phosphate: step 4/4. The protein operates within bacterial outer membrane biogenesis; LOS core biosynthesis. In terms of biological role, catalyzes the interconversion between ADP-D-glycero-beta-D-manno-heptose and ADP-L-glycero-beta-D-manno-heptose via an epimerization at carbon 6 of the heptose. The sequence is that of ADP-L-glycero-D-manno-heptose-6-epimerase from Neisseria gonorrhoeae.